Consider the following 159-residue polypeptide: Cyclic pyranopterin monophosphate synthase (159 aa).

Substrate is bound by residues 75–77 (LCH) and 113–114 (ME). D128 is an active-site residue.

This sequence belongs to the MoaC family. In terms of assembly, homohexamer; trimer of dimers.

The enzyme catalyses (8S)-3',8-cyclo-7,8-dihydroguanosine 5'-triphosphate = cyclic pyranopterin phosphate + diphosphate. It functions in the pathway cofactor biosynthesis; molybdopterin biosynthesis. Catalyzes the conversion of (8S)-3',8-cyclo-7,8-dihydroguanosine 5'-triphosphate to cyclic pyranopterin monophosphate (cPMP). This chain is Cyclic pyranopterin monophosphate synthase, found in Cereibacter sphaeroides (strain ATCC 17023 / DSM 158 / JCM 6121 / CCUG 31486 / LMG 2827 / NBRC 12203 / NCIMB 8253 / ATH 2.4.1.) (Rhodobacter sphaeroides).